Here is a 164-residue protein sequence, read N- to C-terminus: Sec-independent protein translocase protein TatB (164 aa).

The chain crosses the membrane as a helical span at residues 1–21 (MIDIGLSKMALIGAVALIVIG). The interval 81 to 102 (ASEFQKDWESGTSDAAATGHDG) is disordered.

It belongs to the TatB family. The Tat system comprises two distinct complexes: a TatABC complex, containing multiple copies of TatA, TatB and TatC subunits, and a separate TatA complex, containing only TatA subunits. Substrates initially bind to the TatABC complex, which probably triggers association of the separate TatA complex to form the active translocon.

It is found in the cell inner membrane. Its function is as follows. Part of the twin-arginine translocation (Tat) system that transports large folded proteins containing a characteristic twin-arginine motif in their signal peptide across membranes. Together with TatC, TatB is part of a receptor directly interacting with Tat signal peptides. TatB may form an oligomeric binding site that transiently accommodates folded Tat precursor proteins before their translocation. The protein is Sec-independent protein translocase protein TatB of Paracidovorax citrulli (strain AAC00-1) (Acidovorax citrulli).